We begin with the raw amino-acid sequence, 122 residues long: Large ribosomal subunit protein uL14 (122 aa).

Belongs to the universal ribosomal protein uL14 family. As to quaternary structure, part of the 50S ribosomal subunit. Forms a cluster with proteins L3 and L19. In the 70S ribosome, L14 and L19 interact and together make contacts with the 16S rRNA in bridges B5 and B8.

Functionally, binds to 23S rRNA. Forms part of two intersubunit bridges in the 70S ribosome. This is Large ribosomal subunit protein uL14 from Magnetococcus marinus (strain ATCC BAA-1437 / JCM 17883 / MC-1).